A 233-amino-acid polypeptide reads, in one-letter code: Leucyl/phenylalanyl-tRNA--protein transferase (233 aa).

The protein belongs to the L/F-transferase family.

It is found in the cytoplasm. The enzyme catalyses N-terminal L-lysyl-[protein] + L-leucyl-tRNA(Leu) = N-terminal L-leucyl-L-lysyl-[protein] + tRNA(Leu) + H(+). It catalyses the reaction N-terminal L-arginyl-[protein] + L-leucyl-tRNA(Leu) = N-terminal L-leucyl-L-arginyl-[protein] + tRNA(Leu) + H(+). It carries out the reaction L-phenylalanyl-tRNA(Phe) + an N-terminal L-alpha-aminoacyl-[protein] = an N-terminal L-phenylalanyl-L-alpha-aminoacyl-[protein] + tRNA(Phe). In terms of biological role, functions in the N-end rule pathway of protein degradation where it conjugates Leu, Phe and, less efficiently, Met from aminoacyl-tRNAs to the N-termini of proteins containing an N-terminal arginine or lysine. The polypeptide is Leucyl/phenylalanyl-tRNA--protein transferase (Klebsiella pneumoniae subsp. pneumoniae (strain ATCC 700721 / MGH 78578)).